Consider the following 177-residue polypeptide: Large ribosomal subunit protein uL6 (177 aa).

This sequence belongs to the universal ribosomal protein uL6 family. As to quaternary structure, part of the 50S ribosomal subunit.

This protein binds to the 23S rRNA, and is important in its secondary structure. It is located near the subunit interface in the base of the L7/L12 stalk, and near the tRNA binding site of the peptidyltransferase center. The polypeptide is Large ribosomal subunit protein uL6 (Azorhizobium caulinodans (strain ATCC 43989 / DSM 5975 / JCM 20966 / LMG 6465 / NBRC 14845 / NCIMB 13405 / ORS 571)).